The primary structure comprises 262 residues: Type III pantothenate kinase (262 aa).

ATP is bound at residue 10 to 17 (DIGNTTTV). Residue 110–113 (GADR) participates in substrate binding. The active-site Proton acceptor is the Asp112. Asp134 is a binding site for K(+). Thr137 serves as a coordination point for ATP. Position 189 (Thr189) interacts with substrate.

The protein belongs to the type III pantothenate kinase family. As to quaternary structure, homodimer. The cofactor is NH4(+). Requires K(+) as cofactor.

Its subcellular location is the cytoplasm. The catalysed reaction is (R)-pantothenate + ATP = (R)-4'-phosphopantothenate + ADP + H(+). The protein operates within cofactor biosynthesis; coenzyme A biosynthesis; CoA from (R)-pantothenate: step 1/5. In terms of biological role, catalyzes the phosphorylation of pantothenate (Pan), the first step in CoA biosynthesis. This chain is Type III pantothenate kinase, found in Deinococcus radiodurans (strain ATCC 13939 / DSM 20539 / JCM 16871 / CCUG 27074 / LMG 4051 / NBRC 15346 / NCIMB 9279 / VKM B-1422 / R1).